The chain runs to 204 residues: Ras-related protein Rab-1D (204 aa).

Residues 17 to 25 (GDSGVGKSC), 35 to 42 (WTDTHIST), 65 to 69 (DTAGQ), 123 to 126 (NKTD), and 153 to 155 (SAK) contribute to the GTP site. Residues 39-47 (HISTIGVDF) carry the Effector region motif. Positions 182–191 (PKPDEVDIKS) are enriched in basic and acidic residues. Positions 182 to 204 (PKPDEVDIKSKNKTKSGGKKSFC) are disordered. Residues 192 to 204 (KNKTKSGGKKSFC) are compositionally biased toward basic residues. Residue Cys204 is the site of S-geranylgeranyl cysteine attachment.

It belongs to the small GTPase superfamily. Rab family.

The protein resides in the cell membrane. In Dictyostelium discoideum (Social amoeba), this protein is Ras-related protein Rab-1D (rab1D).